The sequence spans 50 residues: Penaeidin-1 (50 aa).

3 cysteine pairs are disulfide-bonded: Cys25/Cys38, Cys27/Cys45, and Cys39/Cys46.

As to expression, higher expression in hemocytes and to a lesser extent in heart, testis, gills, intestine, lymphoid organ and hepatopancreas. Traces in eyes and subcuticular epithelium. Not present in the brain.

It localises to the cytoplasmic granule. Functionally, antibacterial activity against M.luteus and E.coli bacteria. Antifungal activity against N.crassa and F.oxysporum. Presents chitin-binding activity. The chain is Penaeidin-1 from Penaeus vannamei (Whiteleg shrimp).